A 123-amino-acid polypeptide reads, in one-letter code: Fluoride-specific ion channel FluC (123 aa).

The next 4 membrane-spanning stretches (helical) occupy residues 7–27 (LAVA…SGLL), 39–59 (MVNG…FWGF), 68–88 (FLGT…YETF), and 101–121 (LNVA…FLLA). Na(+)-binding residues include glycine 75 and serine 78.

The protein belongs to the fluoride channel Fluc/FEX (TC 1.A.43) family.

The protein localises to the cell membrane. It catalyses the reaction fluoride(in) = fluoride(out). With respect to regulation, na(+) is not transported, but it plays an essential structural role and its presence is essential for fluoride channel function. Its function is as follows. Fluoride-specific ion channel. Important for reducing fluoride concentration in the cell, thus reducing its toxicity. The chain is Fluoride-specific ion channel FluC from Thermococcus gammatolerans (strain DSM 15229 / JCM 11827 / EJ3).